We begin with the raw amino-acid sequence, 311 residues long: Methionyl-tRNA formyltransferase (311 aa).

A (6S)-5,6,7,8-tetrahydrofolate-binding site is contributed by 109 to 112; sequence SLLP.

The protein belongs to the Fmt family.

The catalysed reaction is L-methionyl-tRNA(fMet) + (6R)-10-formyltetrahydrofolate = N-formyl-L-methionyl-tRNA(fMet) + (6S)-5,6,7,8-tetrahydrofolate + H(+). Its function is as follows. Attaches a formyl group to the free amino group of methionyl-tRNA(fMet). The formyl group appears to play a dual role in the initiator identity of N-formylmethionyl-tRNA by promoting its recognition by IF2 and preventing the misappropriation of this tRNA by the elongation apparatus. The polypeptide is Methionyl-tRNA formyltransferase (Staphylococcus aureus (strain JH1)).